We begin with the raw amino-acid sequence, 143 residues long: MSLSSKQKATVKDFFSKMSTRSDDIGAEALSRLVAVYPQTKSYFSHWKDASPGSAPVRKHGITTMGGVYDAVGKIDDLKGGLLSLSELHAFMLRVDPVNFKLLAHCMLVCMSMIFPEEFTPQVHVAVDKFLAQLALALAEKYR.

Serine 2 bears the N-acetylserine mark. The region spanning 2 to 143 is the Globin domain; that stretch reads SLSSKQKATV…LALALAEKYR (142 aa). Histidine 60 lines the O2 pocket. Histidine 89 is a binding site for heme b.

Belongs to the globin family. In terms of assembly, hb 2 is a heterotetramer of two alpha-2 and two beta-2 chains. As to expression, red blood cells.

In terms of biological role, involved in oxygen transport from gills to the various peripheral tissues. This chain is Hemoglobin subunit alpha-2 (hba2), found in Gadus morhua (Atlantic cod).